Here is a 224-residue protein sequence, read N- to C-terminus: Synaptonemal complex protein 3 (224 aa).

Coiled coils occupy residues 63 to 97 (RVKC…WEER) and 137 to 171 (HDSM…QSST).

As to quaternary structure, interacts with gras-1. Interacts with brc-1 and brd-1.

It localises to the chromosome. Its function is as follows. Plays a role in early meiotic events; during prophase I contributes to synaptonemal complex (SC) assembly, synapsis and chiasmata formation and stabilization of homologous chromosomes pairing. Required for restricting SC assembly to bridge paired chromosome axes. Required for the timely progression of meiotic crossover recombination. Required for the synapsis checkpoint. The sequence is that of Synaptonemal complex protein 3 from Caenorhabditis elegans.